The sequence spans 1169 residues: Flocculation protein FLO10 (1169 aa).

The signal sequence occupies residues 1–24 (MPVAARYIFLTGLFLLSVANVALG). The PA14 domain maps to 111–271 (PVKRGVKLCS…GTEVNDDFEG (161 aa)). 3 N-linked (GlcNAc...) asparagine glycosylation sites follow: Asn-122, Asn-157, and Asn-279. Repeat copies occupy residues 303–326 (SSWS…VTPY), 330–356 (SSWS…YVTS), 357–383 (SSSS…YVSS), 384–419 (STAA…YVTS), 420–446 (SSWS…YVSS), 447–482 (STAA…YVTS), 483–509 (SSSS…YVSS), 510–545 (STAA…YVTS), 546–572 (SSWS…YVSS), and 573–608 (STAA…YATS). The tract at residues 303–572 (SSWSSSEVCT…TSYVTPYVSS (270 aa)) is 6 X 27 AA approximate repeats, Ser/Thr-rich. Positions 384-608 (STAAANYTSS…TSTSTPYATS (225 aa)) are 4 X 36 AA approximate repeats, Ser/Thr-rich. N-linked (GlcNAc...) asparagine glycosylation is present at Asn-389. The N-linked (GlcNAc...) asparagine glycan is linked to Asn-452. Asn-515 carries an N-linked (GlcNAc...) asparagine glycan. 3 N-linked (GlcNAc...) asparagine glycosylation sites follow: Asn-578, Asn-656, and Asn-686. Over residues 798–819 (TKVSSSESSESHRTSPTTSSES) the composition is skewed to low complexity. Disordered stretches follow at residues 798 to 837 (TKVS…SSFS), 856 to 920 (TPSS…SRDR), and 1070 to 1107 (RNNN…EAVS). A compositionally biased stretch (polar residues) spans 856–884 (TPSSPISTVAPRSTGLNSQTESTNSSKET). The N-linked (GlcNAc...) asparagine glycan is linked to Asn-879. Over residues 886–902 (SSENSASVMPSSSATSP) the composition is skewed to low complexity. The segment covering 906–916 (KVTSDETSSGF) has biased composition (polar residues). Over residues 1077 to 1107 (TSGTTSIETHTTTTSNASENSDNVSASEAVS) the composition is skewed to low complexity. 2 N-linked (GlcNAc...) asparagine glycosylation sites follow: Asn-1092 and Asn-1099. A lipid anchor (GPI-anchor amidated glycine) is attached at Gly-1146. Residues 1147–1169 (IANHLLTNSGISIFIASLLLAIV) constitute a propeptide, removed in mature form.

This sequence belongs to the flocculin family. In terms of processing, extensively O-glycosylated. The GPI-anchor is attached to the protein in the endoplasmic reticulum and serves to target the protein to the cell surface. There, the glucosamine-inositol phospholipid moiety is cleaved off and the GPI-modified mannoprotein is covalently attached via its lipidless GPI glycan remnant to the 1,6-beta-glucan of the outer cell wall layer.

The protein localises to the secreted. It is found in the cell wall. The protein resides in the membrane. Functionally, cell wall protein that participates directly in adhesive cell-cell interactions during yeast flocculation, a reversible, asexual and Ca(2+)-dependent process in which cells adhere to form aggregates (flocs) consisting of thousands of cells. The lectin-like protein sticks out of the cell wall of flocculent cells and selectively binds mannose residues in the cell walls of adjacent cells. Activity is inhibited by mannose, glucose, maltose and sucrose. Also involved in cell-substrate adhesion, haploid invasive growth and diploid pseudohyphae formation. The polypeptide is Flocculation protein FLO10 (FLO10) (Saccharomyces cerevisiae (strain ATCC 204508 / S288c) (Baker's yeast)).